The chain runs to 190 residues: Adenylate kinase (190 aa).

ATP is bound at residue 11 to 16 (GSGKGT). The NMP stretch occupies residues 31–60 (STGDVLRGEMKAETELGKIAKDYIEKGQLV). Residues threonine 32, arginine 37, 58–60 (QLV), 86–89 (GFPR), and glutamine 93 each bind AMP. Positions 127-137 (ERGKVSGRSDD) are LID. Residue arginine 128 participates in ATP binding. AMP contacts are provided by arginine 134 and arginine 145. An ATP-binding site is contributed by glycine 173.

This sequence belongs to the adenylate kinase family. In terms of assembly, monomer.

It is found in the cytoplasm. It catalyses the reaction AMP + ATP = 2 ADP. Its pathway is purine metabolism; AMP biosynthesis via salvage pathway; AMP from ADP: step 1/1. Its function is as follows. Catalyzes the reversible transfer of the terminal phosphate group between ATP and AMP. Plays an important role in cellular energy homeostasis and in adenine nucleotide metabolism. In Parabacteroides distasonis (strain ATCC 8503 / DSM 20701 / CIP 104284 / JCM 5825 / NCTC 11152), this protein is Adenylate kinase.